We begin with the raw amino-acid sequence, 171 residues long: Large ribosomal subunit protein bL9 (171 aa).

This sequence belongs to the bacterial ribosomal protein bL9 family.

Functionally, binds to the 23S rRNA. The polypeptide is Large ribosomal subunit protein bL9 (Rickettsia peacockii (strain Rustic)).